The primary structure comprises 211 residues: Probable nicotinate-nucleotide adenylyltransferase (211 aa).

It belongs to the NadD family.

The enzyme catalyses nicotinate beta-D-ribonucleotide + ATP + H(+) = deamido-NAD(+) + diphosphate. The protein operates within cofactor biosynthesis; NAD(+) biosynthesis; deamido-NAD(+) from nicotinate D-ribonucleotide: step 1/1. In terms of biological role, catalyzes the reversible adenylation of nicotinate mononucleotide (NaMN) to nicotinic acid adenine dinucleotide (NaAD). This is Probable nicotinate-nucleotide adenylyltransferase from Corynebacterium kroppenstedtii (strain DSM 44385 / JCM 11950 / CIP 105744 / CCUG 35717).